Reading from the N-terminus, the 427-residue chain is Histidine--tRNA ligase (427 aa).

It belongs to the class-II aminoacyl-tRNA synthetase family. In terms of assembly, homodimer.

Its subcellular location is the cytoplasm. It catalyses the reaction tRNA(His) + L-histidine + ATP = L-histidyl-tRNA(His) + AMP + diphosphate + H(+). This chain is Histidine--tRNA ligase, found in Aster yellows witches'-broom phytoplasma (strain AYWB).